A 333-amino-acid chain; its full sequence is Arylacetonitrilase (333 aa).

Positions 9–284 (VRVAVTQAEP…EGIIYADLEM (276 aa)) constitute a CN hydrolase domain. The active-site Proton acceptor is the Glu49. Lys129 is an active-site residue. Cys164 acts as the Nucleophile in catalysis.

This sequence belongs to the carbon-nitrogen hydrolase superfamily. Nitrilase family.

It carries out the reaction a nitrile + 2 H2O = a carboxylate + NH4(+). It catalyses the reaction 4-chlorophenylacetonitrile + 2 H2O = 4-chlorophenylacetate + NH4(+). Nitrilase that hydrolyzes preferentially phenylacetonitrile, (R,S)-mandelonitrile, and 3-indolylacetonitrile. This chain is Arylacetonitrilase, found in Aspergillus oryzae (strain ATCC 42149 / RIB 40) (Yellow koji mold).